The following is a 201-amino-acid chain: MSKKYEHLFKFIFVGDSGVGKSSILLRFTEDTFTESYISTIGVDFKIKTVYIEGKAIKLQIWDTAGQERFRVHNNSQYRGCHAVMVVYDVTDQRSFENVAKWIQEIERYARDNVIKMIIGNKSDMISQKVVDPFLAQEFADSLDITFKETSAKQAINIEDAFISLVKLCIDRIEEFKPSSTSSSTIILKKPQSQKSNCIIN.

15–22 (GDSGVGKS) serves as a coordination point for GTP. Residues 37–45 (YISTIGVDF) carry the Effector region motif. GTP-binding positions include 63-67 (DTAGQ) and 121-124 (NKSD). Position 198 is a cysteine methyl ester (cysteine 198). The S-geranylgeranyl cysteine moiety is linked to residue cysteine 198. A propeptide spans 199 to 201 (IIN) (removed in mature form).

The protein belongs to the small GTPase superfamily. Rab family.

It is found in the cell membrane. This is Ras-related protein RabA (rabA) from Dictyostelium discoideum (Social amoeba).